The primary structure comprises 220 residues: Iron-sulfur cluster repair protein YtfE (220 aa).

This sequence belongs to the RIC family. YtfE subfamily. In terms of assembly, homodimer.

The protein resides in the cytoplasm. In terms of biological role, di-iron-containing protein involved in the repair of iron-sulfur clusters damaged by oxidative and nitrosative stress conditions. The chain is Iron-sulfur cluster repair protein YtfE from Escherichia coli O8 (strain IAI1).